Consider the following 912-residue polypeptide: Effector protein hopAE1 (912 aa).

Over residues 1 to 13 (MMPSQITRSSHSS) the composition is skewed to polar residues. The tract at residues 1-32 (MMPSQITRSSHSSLPEVAPASGDATGVSEQTP) is disordered.

This sequence belongs to the HopW family.

The protein resides in the secreted. The polypeptide is Effector protein hopAE1 (hopAE1) (Pseudomonas savastanoi pv. phaseolicola (strain 1448A / Race 6) (Pseudomonas syringae pv. phaseolicola (strain 1448A / Race 6))).